A 159-amino-acid polypeptide reads, in one-letter code: 2-C-methyl-D-erythritol 2,4-cyclodiphosphate synthase (159 aa).

Positions 8 and 10 each coordinate a divalent metal cation. Residues 8-10 and 34-35 each bind 4-CDP-2-C-methyl-D-erythritol 2-phosphate; these read DVH and HS. Residue His42 coordinates a divalent metal cation. Residues 56 to 58, 61 to 65, 100 to 106, 132 to 135, Phe139, and Arg142 contribute to the 4-CDP-2-C-methyl-D-erythritol 2-phosphate site; these read DIG, FPDTD, AQAPKML, and TTTE.

It belongs to the IspF family. As to quaternary structure, homotrimer. The cofactor is a divalent metal cation.

The catalysed reaction is 4-CDP-2-C-methyl-D-erythritol 2-phosphate = 2-C-methyl-D-erythritol 2,4-cyclic diphosphate + CMP. Its pathway is isoprenoid biosynthesis; isopentenyl diphosphate biosynthesis via DXP pathway; isopentenyl diphosphate from 1-deoxy-D-xylulose 5-phosphate: step 4/6. Its function is as follows. Involved in the biosynthesis of isopentenyl diphosphate (IPP) and dimethylallyl diphosphate (DMAPP), two major building blocks of isoprenoid compounds. Catalyzes the conversion of 4-diphosphocytidyl-2-C-methyl-D-erythritol 2-phosphate (CDP-ME2P) to 2-C-methyl-D-erythritol 2,4-cyclodiphosphate (ME-CPP) with a corresponding release of cytidine 5-monophosphate (CMP). The protein is 2-C-methyl-D-erythritol 2,4-cyclodiphosphate synthase of Salmonella arizonae (strain ATCC BAA-731 / CDC346-86 / RSK2980).